The primary structure comprises 317 residues: METWQEVTVHVHRDAQEAVSHVLIETGSQGVAIADSADYIGQKDRFGELYPDVEQSDMIAIIAYYPSSTNLADVIATINEQLAELASFGLQVGQVTVDSQELAEEDWADNWKKYYEPARITHDLTIVPSWTDYDASAGEKVIKLDPGMAFGTGTHPTTKMSLFALEQILRGGETVIDVGTGSGVLSIASSLLGAKTIYAYDLDDVAVRVAQENIDLNQGTDNIHVAAGDLLKGVSQEADVIVANILADILVLLTDDAYRLIKKEGYLILSGIISEKLDMVLEAAFSAGFFLETHMVQGEWNALVFKKTDDISGVIGG.

S-adenosyl-L-methionine contacts are provided by threonine 158, glycine 179, aspartate 201, and asparagine 244.

The protein belongs to the methyltransferase superfamily. PrmA family.

Its subcellular location is the cytoplasm. The enzyme catalyses L-lysyl-[protein] + 3 S-adenosyl-L-methionine = N(6),N(6),N(6)-trimethyl-L-lysyl-[protein] + 3 S-adenosyl-L-homocysteine + 3 H(+). Functionally, methylates ribosomal protein L11. This chain is Ribosomal protein L11 methyltransferase, found in Streptococcus pyogenes serotype M28 (strain MGAS6180).